A 638-amino-acid polypeptide reads, in one-letter code: Exotoxin A (638 aa).

The first 25 residues, 1–25, serve as a signal peptide directing secretion; that stretch reads MHLTPHWIPLVASLGLLAGGSFASA. A domain Ia (required for target cell recognition) region spans residues 26–277; that stretch reads AEEAFDLWNE…VISHRLHFPE (252 aa). Positions 278–389 are II (required for translocation in target cell cytoplasm); that stretch reads GGSLAALTAH…TGNDEAGAAS (112 aa). Cys-290 and Cys-312 form a disulfide bridge. The interval 390-429 is domain Ib; that stretch reads ADVVSLTCPVAAGECAGPADSGDALLERNYPTGAEFLGDG. The III (required for ADP-ribosyl activity) stretch occupies residues 430-638; sequence GDISFSTRGT…PGKPPREDLK (209 aa). NAD(+) is bound by residues 465–467, Ser-474, 479–485, and Glu-578; these read HGT and GVRARSQ. Residue Glu-578 is part of the active site. Residues 596–638 form a disordered region; the sequence is IPTDPRNVGGDLDPSSIPDKEQAISALPDYASQPGKPPREDLK.

In terms of processing, the 8 cysteines participate in intrachain disulfide bonds.

The catalysed reaction is diphthamide-[translation elongation factor 2] + NAD(+) = N-(ADP-D-ribosyl)diphthamide-[translation elongation factor 2] + nicotinamide + H(+). With respect to regulation, inhibited by 1,8-naphthalimide (NAP) as well as a number of poly(ADP-ribose) polymerase inhibitors and other compounds. An NAD-dependent ADP-ribosyltransferase (ADPRT). Catalyzes the transfer of the ADP ribosyl moiety of oxidized NAD (NAD(+)) onto eukaryotic elongation factor 2 (eEF-2) thus arresting protein synthesis. Has an LD(50) of 65 ng/ml against the human lung epithelial cell line C38. The protein is Exotoxin A of Pseudomonas aeruginosa (strain ATCC 15692 / DSM 22644 / CIP 104116 / JCM 14847 / LMG 12228 / 1C / PRS 101 / PAO1).